The following is a 331-amino-acid chain: Pyruvate dehydrogenase E1 component subunit beta (331 aa).

Residue glutamate 60 participates in thiamine diphosphate binding. Leucine 113, alanine 161, isoleucine 162, aspartate 164, and asparagine 166 together coordinate K(+).

In terms of assembly, heterodimer of an alpha and a beta chain. Thiamine diphosphate serves as cofactor.

It is found in the plastid. Its subcellular location is the chloroplast. It catalyses the reaction N(6)-[(R)-lipoyl]-L-lysyl-[protein] + pyruvate + H(+) = N(6)-[(R)-S(8)-acetyldihydrolipoyl]-L-lysyl-[protein] + CO2. The pyruvate dehydrogenase complex catalyzes the overall conversion of pyruvate to acetyl-CoA and CO(2). It contains multiple copies of three enzymatic components: pyruvate dehydrogenase (E1), dihydrolipoamide acetyltransferase (E2) and lipoamide dehydrogenase (E3). This is Pyruvate dehydrogenase E1 component subunit beta (pdhB) from Porphyra purpurea (Red seaweed).